We begin with the raw amino-acid sequence, 276 residues long: Dermonecrotic toxin LlSicTox-alphaIV2iv (276 aa).

The active site involves His-5. Mg(2+) is bound by residues Glu-25 and Asp-27. The Nucleophile role is filled by His-41. Intrachain disulfides connect Cys-45–Cys-51 and Cys-47–Cys-193. A Mg(2+)-binding site is contributed by Asp-85.

This sequence belongs to the arthropod phospholipase D family. Class II subfamily. It depends on Mg(2+) as a cofactor. As to expression, expressed by the venom gland.

It is found in the secreted. It carries out the reaction an N-(acyl)-sphingosylphosphocholine = an N-(acyl)-sphingosyl-1,3-cyclic phosphate + choline. The catalysed reaction is an N-(acyl)-sphingosylphosphoethanolamine = an N-(acyl)-sphingosyl-1,3-cyclic phosphate + ethanolamine. The enzyme catalyses a 1-acyl-sn-glycero-3-phosphocholine = a 1-acyl-sn-glycero-2,3-cyclic phosphate + choline. It catalyses the reaction a 1-acyl-sn-glycero-3-phosphoethanolamine = a 1-acyl-sn-glycero-2,3-cyclic phosphate + ethanolamine. Dermonecrotic toxins cleave the phosphodiester linkage between the phosphate and headgroup of certain phospholipids (sphingolipid and lysolipid substrates), forming an alcohol (often choline) and a cyclic phosphate. This toxin acts on sphingomyelin (SM). It may also act on ceramide phosphoethanolamine (CPE), lysophosphatidylcholine (LPC) and lysophosphatidylethanolamine (LPE), but not on lysophosphatidylserine (LPS), and lysophosphatidylglycerol (LPG). It acts by transphosphatidylation, releasing exclusively cyclic phosphate products as second products. Induces dermonecrosis, hemolysis, increased vascular permeability, edema, inflammatory response, and platelet aggregation. This chain is Dermonecrotic toxin LlSicTox-alphaIV2iv, found in Loxosceles laeta (South American recluse spider).